Consider the following 714-residue polypeptide: Inducible lysine decarboxylase (714 aa).

Lys367 carries the N6-(pyridoxal phosphate)lysine modification.

It belongs to the Orn/Lys/Arg decarboxylase class-I family. Homodecamer. Interacts with RavA. The cofactor is pyridoxal 5'-phosphate.

Its subcellular location is the cytoplasm. It carries out the reaction L-lysine + H(+) = cadaverine + CO2. In Salmonella typhi, this protein is Inducible lysine decarboxylase (cadA).